The chain runs to 270 residues: 23S rRNA (adenosine(1067)-2'-O)-methyltransferase (270 aa).

S-adenosyl-L-methionine-binding residues include arginine 135, arginine 165, glycine 218, isoleucine 238, and leucine 247.

Belongs to the class IV-like SAM-binding methyltransferase superfamily. RNA methyltransferase TsnR/AvirB family.

It carries out the reaction adenosine(1067) in 23S rRNA + S-adenosyl-L-methionine = 2'-O-methyladenosine(1067) in 23S rRNA + S-adenosyl-L-homocysteine + H(+). Its function is as follows. Specifically methylates the adenosine-1067 in 23S ribosomal RNA. Confers resistance to antibiotic thiostrepton. This is 23S rRNA (adenosine(1067)-2'-O)-methyltransferase from Streptomyces laurentii.